We begin with the raw amino-acid sequence, 84 residues long: U-scoloptoxin(10)-Er1a (84 aa).

A signal peptide spans 1 to 24; sequence MSRFCLLFVAFGFVLYFLHMEVTG.

Belongs to the scoloptoxin-10 family. In terms of processing, contains 3 disulfide bonds. In terms of tissue distribution, expressed by the venom gland.

The protein localises to the secreted. The protein is U-scoloptoxin(10)-Er1a of Ethmostigmus rubripes (Giant centipede).